The chain runs to 129 residues: Small ribosomal subunit protein uS9 (129 aa).

This sequence belongs to the universal ribosomal protein uS9 family.

This chain is Small ribosomal subunit protein uS9, found in Wolinella succinogenes (strain ATCC 29543 / DSM 1740 / CCUG 13145 / JCM 31913 / LMG 7466 / NCTC 11488 / FDC 602W) (Vibrio succinogenes).